A 582-amino-acid chain; its full sequence is Pescadillo homolog (582 aa).

Residues 277-329 adopt a coiled-coil conformation; the sequence is LSALSASLARVVATVEEEENQLDNFPTEEEDQENMQAREKEQKEQEAQKRLFE. Over residues 294 to 309 the composition is skewed to acidic residues; that stretch reads EENQLDNFPTEEEDQE. A disordered region spans residues 294–317; that stretch reads EENQLDNFPTEEEDQENMQAREKE. Residues 323–416 form the BRCT domain; sequence AQKRLFEGLK…MRLPVEDYFL (94 aa). Residues 445 to 454 are compositionally biased toward basic and acidic residues; that stretch reads ALQRGEKPVQ. Disordered regions lie at residues 445–511 and 554–582; these read ALQR…ETGS and REVN…AKKQ. The span at 455–477 shows a compositional bias: acidic residues; it reads EEDEEEEDEDEEEDDDVDDEEFT. Residues 478-490 show a composition bias toward basic and acidic residues; the sequence is EEKNLKKMEDTRA. Residues 517 to 582 are a coiled coil; that stretch reads RLEQEEKAEE…QKKQKKAKKQ (66 aa). The segment covering 572–582 has biased composition (basic residues); it reads AQKKQKKAKKQ.

This sequence belongs to the pescadillo family. Component of the PeBoW complex, composed of bop1, pes1 and wdr12. The complex is held together by bop1, which interacts with pes1 via its N-terminal domain and with wdr12 via a high-affinity interaction between the seven-bladed beta-propeller domains of the 2 proteins. The PeBoW complex associates with the 66S pre-ribosome.

It is found in the nucleus. The protein localises to the nucleolus. The protein resides in the nucleoplasm. Component of the PeBoW complex, which is required for maturation of 28S and 5.8S ribosomal RNAs and formation of the 60S ribosome. This is Pescadillo homolog (pes1) from Salmo salar (Atlantic salmon).